The chain runs to 403 residues: Probable tRNA sulfurtransferase (403 aa).

The THUMP domain occupies 60 to 165 (QLVEERLKPI…KEGVFLSCRT (106 aa)). Residues 183 to 184 (ML), 208 to 209 (HF), R265, G287, and Q296 each bind ATP.

This sequence belongs to the ThiI family.

It localises to the cytoplasm. It catalyses the reaction [ThiI sulfur-carrier protein]-S-sulfanyl-L-cysteine + a uridine in tRNA + 2 reduced [2Fe-2S]-[ferredoxin] + ATP + H(+) = [ThiI sulfur-carrier protein]-L-cysteine + a 4-thiouridine in tRNA + 2 oxidized [2Fe-2S]-[ferredoxin] + AMP + diphosphate. The enzyme catalyses [ThiS sulfur-carrier protein]-C-terminal Gly-Gly-AMP + S-sulfanyl-L-cysteinyl-[cysteine desulfurase] + AH2 = [ThiS sulfur-carrier protein]-C-terminal-Gly-aminoethanethioate + L-cysteinyl-[cysteine desulfurase] + A + AMP + 2 H(+). It participates in cofactor biosynthesis; thiamine diphosphate biosynthesis. Functionally, catalyzes the ATP-dependent transfer of a sulfur to tRNA to produce 4-thiouridine in position 8 of tRNAs, which functions as a near-UV photosensor. Also catalyzes the transfer of sulfur to the sulfur carrier protein ThiS, forming ThiS-thiocarboxylate. This is a step in the synthesis of thiazole, in the thiamine biosynthesis pathway. The sulfur is donated as persulfide by IscS. This is Probable tRNA sulfurtransferase from Listeria monocytogenes serotype 4b (strain CLIP80459).